The primary structure comprises 385 residues: Heptahelical transmembrane protein 4 (385 aa).

Residues 1-12 show a composition bias toward basic and acidic residues; that stretch reads MGDEAEIKEHLK. The segment at 1-22 is disordered; the sequence is MGDEAEIKEHLKPQASSETMDK. Topologically, residues 1–79 are cytoplasmic; that stretch reads MGDEAEIKEH…LSIFTIHNET (79 aa). Residues 80 to 100 form a helical membrane-spanning segment; the sequence is LNVWTHLIGFFLFLALTIYTA. Topologically, residues 101-191 are extracellular; that stretch reads TKVPSVVDLH…LIFRPITRWP (91 aa). Residues 192–212 traverse the membrane as a helical segment; sequence FYAFLGGAMFCLLASSTCHLL. At 213 to 228 the chain is on the cytoplasmic side; it reads SCHSERVSYIMLRLDY. Residues 229–249 traverse the membrane as a helical segment; the sequence is AGIAALIATSFYPPVYYSFMC. Residues 250-256 are Extracellular-facing; sequence DPFFCNL. A helical transmembrane segment spans residues 257–277; the sequence is YLGFITILGIATVLVSLLPVF. Residues 278-288 are Cytoplasmic-facing; the sequence is QSPEFRVVRAS. A helical membrane pass occupies residues 289 to 309; it reads LFFGMGFSGLAPILHKLIIFW. Topologically, residues 310–313 are extracellular; it reads DQPE. The chain crosses the membrane as a helical span at residues 314-334; it reads ALHTTGYEILMGLLYGLGALV. The Cytoplasmic portion of the chain corresponds to 335 to 356; the sequence is YATRIPERWMPGKFDIAGHSHQ. Residues 357–377 form a helical membrane-spanning segment; that stretch reads LFHVLVVAGAFTHYRAGLVYL.

Belongs to the ADIPOR family. Expressed in roots, leaves, stems and flowers.

The protein localises to the membrane. Functionally, may play a role in abiotic stress response. In Arabidopsis thaliana (Mouse-ear cress), this protein is Heptahelical transmembrane protein 4 (HHP4).